Consider the following 187-residue polypeptide: Large ribosomal subunit protein uL5 (187 aa).

Belongs to the universal ribosomal protein uL5 family. In terms of assembly, part of the 50S ribosomal subunit; part of the 5S rRNA/L5/L18/L25 subcomplex. Contacts the 5S rRNA and the P site tRNA. Forms a bridge to the 30S subunit in the 70S ribosome.

Its function is as follows. This is one of the proteins that bind and probably mediate the attachment of the 5S RNA into the large ribosomal subunit, where it forms part of the central protuberance. In the 70S ribosome it contacts protein S13 of the 30S subunit (bridge B1b), connecting the 2 subunits; this bridge is implicated in subunit movement. Contacts the P site tRNA; the 5S rRNA and some of its associated proteins might help stabilize positioning of ribosome-bound tRNAs. This is Large ribosomal subunit protein uL5 from Gluconobacter oxydans (strain 621H) (Gluconobacter suboxydans).